The primary structure comprises 530 residues: Autoinducer-2 kinase (530 aa).

The protein belongs to the FGGY kinase family.

The protein resides in the cytoplasm. The enzyme catalyses (S)-4,5-dihydroxypentane-2,3-dione + ATP = (2S)-2-hydroxy-3,4-dioxopentyl phosphate + ADP + H(+). Catalyzes the phosphorylation of autoinducer-2 (AI-2) to phospho-AI-2, which subsequently inactivates the transcriptional regulator LsrR and leads to the transcription of the lsr operon. Phosphorylates the ring-open form of (S)-4,5-dihydroxypentane-2,3-dione (DPD), which is the precursor to all AI-2 signaling molecules, at the C5 position. This is Autoinducer-2 kinase from Yersinia pestis bv. Antiqua (strain Angola).